Consider the following 339-residue polypeptide: tRNA (cytidine(56)-2'-O)-methyltransferase (339 aa).

S-adenosyl-L-methionine is bound by residues leucine 79 and 105 to 109; that span reads GSEKV. The 108-residue stretch at 188–295 folds into the HD domain; it reads LIEHVKAVEG…VAQADNLFAG (108 aa).

Belongs to the aTrm56 family. As to quaternary structure, homodimer.

The protein localises to the cytoplasm. It catalyses the reaction cytidine(56) in tRNA + S-adenosyl-L-methionine = 2'-O-methylcytidine(56) in tRNA + S-adenosyl-L-homocysteine + H(+). In terms of biological role, specifically catalyzes the AdoMet-dependent 2'-O-ribose methylation of cytidine at position 56 in tRNAs. The polypeptide is tRNA (cytidine(56)-2'-O)-methyltransferase (Thermoplasma acidophilum (strain ATCC 25905 / DSM 1728 / JCM 9062 / NBRC 15155 / AMRC-C165)).